We begin with the raw amino-acid sequence, 357 residues long: Glycerol-3-phosphate dehydrogenase [NAD(P)+] (357 aa).

NADPH contacts are provided by Ser30, Phe31, Arg51, and Lys124. 2 residues coordinate sn-glycerol 3-phosphate: Lys124 and Gly152. Position 156 (Ala156) interacts with NADPH. Sn-glycerol 3-phosphate is bound by residues Lys207, Asp260, Ser270, Arg271, and Asn272. Lys207 acts as the Proton acceptor in catalysis. Arg271 is a binding site for NADPH. Glu297 serves as a coordination point for NADPH.

Belongs to the NAD-dependent glycerol-3-phosphate dehydrogenase family.

It localises to the cytoplasm. The catalysed reaction is sn-glycerol 3-phosphate + NAD(+) = dihydroxyacetone phosphate + NADH + H(+). It carries out the reaction sn-glycerol 3-phosphate + NADP(+) = dihydroxyacetone phosphate + NADPH + H(+). Its pathway is membrane lipid metabolism; glycerophospholipid metabolism. Its function is as follows. Catalyzes the reduction of the glycolytic intermediate dihydroxyacetone phosphate (DHAP) to sn-glycerol 3-phosphate (G3P), the key precursor for phospholipid synthesis. This is Glycerol-3-phosphate dehydrogenase [NAD(P)+] from Acinetobacter baumannii (strain AB307-0294).